The sequence spans 308 residues: Aspartate carbamoyltransferase catalytic subunit (308 aa).

Residues Arg-59 and Thr-60 each contribute to the carbamoyl phosphate site. Lys-87 serves as a coordination point for L-aspartate. Carbamoyl phosphate-binding residues include Arg-109, His-139, and Gln-142. Positions 172 and 224 each coordinate L-aspartate. Carbamoyl phosphate contacts are provided by Ala-265 and Pro-266.

The protein belongs to the aspartate/ornithine carbamoyltransferase superfamily. ATCase family. As to quaternary structure, heterododecamer (2C3:3R2) of six catalytic PyrB chains organized as two trimers (C3), and six regulatory PyrI chains organized as three dimers (R2).

It catalyses the reaction carbamoyl phosphate + L-aspartate = N-carbamoyl-L-aspartate + phosphate + H(+). The protein operates within pyrimidine metabolism; UMP biosynthesis via de novo pathway; (S)-dihydroorotate from bicarbonate: step 2/3. Catalyzes the condensation of carbamoyl phosphate and aspartate to form carbamoyl aspartate and inorganic phosphate, the committed step in the de novo pyrimidine nucleotide biosynthesis pathway. The polypeptide is Aspartate carbamoyltransferase catalytic subunit (Streptococcus mutans serotype c (strain ATCC 700610 / UA159)).